Reading from the N-terminus, the 463-residue chain is Ribosomal protein uS12 methylthiotransferase RimO (463 aa).

The region spanning 11–126 is the MTTase N-terminal domain; that stretch reads PKIGFVSLGC…VMEVVHTHCP (116 aa). Positions 20, 56, 85, 161, 165, and 168 each coordinate [4Fe-4S] cluster. One can recognise a Radical SAM core domain in the interval 147 to 388; sequence LTPRHYAYLK…MAVAEEVSTA (242 aa). A TRAM domain is found at 391–463; the sequence is QRRVGQTMQV…QGHDLVGVPV (73 aa).

This sequence belongs to the methylthiotransferase family. RimO subfamily. Requires [4Fe-4S] cluster as cofactor.

The protein resides in the cytoplasm. The enzyme catalyses L-aspartate(89)-[ribosomal protein uS12]-hydrogen + (sulfur carrier)-SH + AH2 + 2 S-adenosyl-L-methionine = 3-methylsulfanyl-L-aspartate(89)-[ribosomal protein uS12]-hydrogen + (sulfur carrier)-H + 5'-deoxyadenosine + L-methionine + A + S-adenosyl-L-homocysteine + 2 H(+). Its function is as follows. Catalyzes the methylthiolation of an aspartic acid residue of ribosomal protein uS12. The protein is Ribosomal protein uS12 methylthiotransferase RimO of Acidovorax sp. (strain JS42).